Here is a 389-residue protein sequence, read N- to C-terminus: GDSL esterase/lipase At1g28570 (389 aa).

Residues 1-25 (MATLFMKLVSFFLILSTFCLTTVNS) form the signal peptide. Ser-41 serves as the catalytic Nucleophile. N-linked (GlcNAc...) asparagine glycans are attached at residues Asn-137 and Asn-319. Catalysis depends on residues Asp-344 and His-347.

This sequence belongs to the 'GDSL' lipolytic enzyme family.

The protein localises to the secreted. This is GDSL esterase/lipase At1g28570 from Arabidopsis thaliana (Mouse-ear cress).